The following is a 431-amino-acid chain: Mediator of RNA polymerase II transcription subunit 2 (431 aa).

The residue at position 6 (Ser-6) is a Phosphoserine. Residues 105-140 (GKEKEKEREEAEKKRAEQENMRKVREQEELKKRQEL) are compositionally biased toward basic and acidic residues. A disordered region spans residues 105-178 (GKEKEKEREE…ANTTDANGSK (74 aa)). Over residues 143 to 152 (ASQQQQLQQN) the composition is skewed to low complexity. The span at 162–178 (NFSTTAPANTTDANGSK) shows a compositional bias: polar residues. Ser-208 is subject to Phosphoserine; by CDK8. Residues 284–399 (NNINSTKNGK…GDNPPPADNG (116 aa)) form a disordered region. Basic and acidic residues predominate over residues 304-313 (NGDEKNKNNN). Positions 318–365 (NNNNSSEKNNNNNNNNNNNNDDNGNNNNNNSGNDNNNTTNNDSNNKNN) are enriched in low complexity. Positions 366 to 387 (SITTGNDNENIVNNDLPTTVVS) are enriched in polar residues.

This sequence belongs to the mediator complex subunit 2 family. As to quaternary structure, component of the Mediator complex, which is composed of at least 21 subunits that form three structurally distinct submodules. The Mediator head module contains MED6, MED8, MED11, SRB4/MED17, SRB5/MED18, ROX3/MED19, SRB2/MED20 and SRB6/MED22, the middle module contains MED1, MED4, NUT1/MED5, MED7, CSE2/MED9, NUT2/MED10, SRB7/MED21 and SOH1/MED31, and the tail module contains MED2, PGD1/MED3, RGR1/MED14, GAL11/MED15 and SIN4/MED16. The head and the middle modules interact directly with RNA polymerase II, whereas the elongated tail module interacts with gene-specific regulatory proteins.

The protein resides in the nucleus. In terms of biological role, component of the Mediator complex, a coactivator involved in the regulated transcription of nearly all RNA polymerase II-dependent genes. Mediator functions as a bridge to convey information from gene-specific regulatory proteins to the basal RNA polymerase II transcription machinery. The Mediator complex, having a compact conformation in its free form, is recruited to promoters by direct interactions with regulatory proteins and serves for the assembly of a functional preinitiation complex with RNA polymerase II and the general transcription factors. The Mediator complex unfolds to an extended conformation and partially surrounds RNA polymerase II, specifically interacting with the unphosphorylated form of the C-terminal domain (CTD) of RNA polymerase II. The Mediator complex dissociates from the RNA polymerase II holoenzyme and stays at the promoter when transcriptional elongation begins. The sequence is that of Mediator of RNA polymerase II transcription subunit 2 (MED2) from Saccharomyces cerevisiae (strain ATCC 204508 / S288c) (Baker's yeast).